Consider the following 132-residue polypeptide: Small ribosomal subunit protein uS8 (132 aa).

The protein belongs to the universal ribosomal protein uS8 family. As to quaternary structure, part of the 30S ribosomal subunit. Contacts proteins S5 and S12.

One of the primary rRNA binding proteins, it binds directly to 16S rRNA central domain where it helps coordinate assembly of the platform of the 30S subunit. This Gluconacetobacter diazotrophicus (strain ATCC 49037 / DSM 5601 / CCUG 37298 / CIP 103539 / LMG 7603 / PAl5) protein is Small ribosomal subunit protein uS8.